Consider the following 65-residue polypeptide: Conotoxin mr5.1b (65 aa).

Positions 1-19 (MRCVPVFVILLLLIASAPS) are cleaved as a signal peptide. The propeptide occupies 20-48 (VDARLKTKDDMPLPSSHANIKRTLQMLRN). 4-carboxyglutamate is present on Glu-60.

Belongs to the conotoxin T superfamily. Contains 2 disulfide bonds that can be either 'C1-C3, C2-C4' or 'C1-C4, C2-C3', since these disulfide connectivities have been observed for conotoxins with cysteine framework V (for examples, see AC P0DQQ7 and AC P81755). Expressed by the venom duct.

The protein localises to the secreted. This chain is Conotoxin mr5.1b, found in Conus marmoreus (Marble cone).